Consider the following 253-residue polypeptide: 5'-nucleotidase SurE (253 aa).

4 residues coordinate a divalent metal cation: Asp8, Asp9, Ser39, and Asn95.

It belongs to the SurE nucleotidase family. Requires a divalent metal cation as cofactor.

It localises to the cytoplasm. The catalysed reaction is a ribonucleoside 5'-phosphate + H2O = a ribonucleoside + phosphate. Its function is as follows. Nucleotidase that shows phosphatase activity on nucleoside 5'-monophosphates. This Clostridium beijerinckii (strain ATCC 51743 / NCIMB 8052) (Clostridium acetobutylicum) protein is 5'-nucleotidase SurE.